Consider the following 437-residue polypeptide: Adenylosuccinate synthetase (437 aa).

GTP contacts are provided by residues 12 to 18 (GDEGKGK) and 40 to 42 (GHT). D13 (proton acceptor) is an active-site residue. Mg(2+) is bound by residues D13 and G40. Residues 13 to 16 (DEGK), 38 to 41 (NAGH), T128, R142, Q223, T238, and R302 contribute to the IMP site. H41 (proton donor) is an active-site residue. Position 298 to 304 (298 to 304 (TTTGRRR)) interacts with substrate. Residues R304, 330–332 (KLD), and 412–414 (SLG) contribute to the GTP site.

This sequence belongs to the adenylosuccinate synthetase family. As to quaternary structure, homodimer. Mg(2+) is required as a cofactor.

Its subcellular location is the cytoplasm. The catalysed reaction is IMP + L-aspartate + GTP = N(6)-(1,2-dicarboxyethyl)-AMP + GDP + phosphate + 2 H(+). It participates in purine metabolism; AMP biosynthesis via de novo pathway; AMP from IMP: step 1/2. In terms of biological role, plays an important role in the de novo pathway of purine nucleotide biosynthesis. Catalyzes the first committed step in the biosynthesis of AMP from IMP. This Synechococcus sp. (strain RCC307) protein is Adenylosuccinate synthetase.